Here is a 201-residue protein sequence, read N- to C-terminus: Recombination protein RecR (201 aa).

The C4-type zinc-finger motif lies at 57–72 (CSDCRTFTEQDVCAIC). The Toprim domain occupies 81–176 (GLVCVVESPA…MASRIAHGVP (96 aa)).

The protein belongs to the RecR family.

Functionally, may play a role in DNA repair. It seems to be involved in an RecBC-independent recombinational process of DNA repair. It may act with RecF and RecO. This Pectobacterium atrosepticum (strain SCRI 1043 / ATCC BAA-672) (Erwinia carotovora subsp. atroseptica) protein is Recombination protein RecR.